The chain runs to 161 residues: Nascent polypeptide-associated complex subunit beta (161 aa).

Disordered stretches follow at residues 14–41 (LSANNKVGGTRRKLAKKSGTASANKDDS) and 125–161 (QNAQAAAPATEGHEAGEKKDNDIPELIEGQSFDADVE). Residues 37 to 102 (NKDDSKLQAQ…PQEKSLQDLF (66 aa)) form the NAC-A/B domain. Residues 125–134 (QNAQAAAPAT) are compositionally biased toward low complexity. Positions 135 to 146 (EGHEAGEKKDND) are enriched in basic and acidic residues.

It belongs to the NAC-beta family. As to quaternary structure, part of the nascent polypeptide-associated complex (NAC), consisting of EGD2 and EGD1. NAC associates with ribosomes via EGD1.

The protein resides in the cytoplasm. The protein localises to the nucleus. Functionally, component of the nascent polypeptide-associated complex (NAC), a dynamic component of the ribosomal exit tunnel, protecting the emerging polypeptides from interaction with other cytoplasmic proteins to ensure appropriate nascent protein targeting. The NAC complex also promotes mitochondrial protein import by enhancing productive ribosome interactions with the outer mitochondrial membrane and blocks the inappropriate interaction of ribosomes translating non-secretory nascent polypeptides with translocation sites in the membrane of the endoplasmic reticulum. EGD1 may act as a transcription factor that exert a negative effect on the expression of several genes that are transcribed by RNA polymerase II. This Eremothecium gossypii (strain ATCC 10895 / CBS 109.51 / FGSC 9923 / NRRL Y-1056) (Yeast) protein is Nascent polypeptide-associated complex subunit beta (EGD1).